The sequence spans 268 residues: tRNA (guanine-N(7)-)-methyltransferase (268 aa).

The tract at residues 1 to 21 is disordered; the sequence is MMAGAEAPQPQKRYYRQRAHS. A Phosphoserine modification is found at Ser-21. S-adenosyl-L-methionine-binding residues include Gly-78, Glu-101, Arg-103, Asn-134, Ala-135, and Leu-154. Residue Asp-157 is part of the active site. Positions 158-166 are alphaC helix; the sequence is PHFKRTKHK. S-adenosyl-L-methionine contacts are provided by Thr-232 and Glu-234. An alpha6 helix region spans residues 232–240; it reads TEEGKKVLR.

Belongs to the class I-like SAM-binding methyltransferase superfamily. TrmB family. As to quaternary structure, catalytic component of the METTL1-WDR4 complex, composed of METTL1 and WDR4. Phosphorylation at Ser-21 by PKB/AKT1 inactivates its methyltransferase activity via a steric interference mechanism in the active site that locally disrupts the catalytic center. Phosphorylation at Ser-21 does not affect the interaction with WDR4.

Its subcellular location is the nucleus. It carries out the reaction guanosine(46) in tRNA + S-adenosyl-L-methionine = N(7)-methylguanosine(46) in tRNA + S-adenosyl-L-homocysteine. It catalyses the reaction a guanosine in mRNA + S-adenosyl-L-methionine = an N(7)-methylguanosine in mRNA + S-adenosyl-L-homocysteine. The enzyme catalyses a guanosine in miRNA + S-adenosyl-L-methionine = an N(7)-methylguanosine in miRNA + S-adenosyl-L-homocysteine. The protein operates within tRNA modification; N(7)-methylguanine-tRNA biosynthesis. Its function is as follows. Catalytic component of METTL1-WDR4 methyltransferase complex that mediates the formation of N(7)-methylguanine in a subset of RNA species, such as tRNAs, mRNAs and microRNAs (miRNAs). Catalyzes the formation of N(7)-methylguanine at position 46 (m7G46) in a large subset of tRNAs that contain the 5'-RAGGU-3' motif within the variable loop. M7G46 interacts with C13-G22 in the D-loop to stabilize tRNA tertiary structure and protect tRNAs from decay. Also acts as a methyltransferase for a subset of internal N(7)-methylguanine in mRNAs. Internal N(7)-methylguanine methylation of mRNAs in response to stress promotes their relocalization to stress granules, thereby suppressing their translation. Also methylates a specific subset of miRNAs, such as let-7. N(7)-methylguanine methylation of let-7 miRNA promotes let-7 miRNA processing by disrupting an inhibitory secondary structure within the primary miRNA transcript (pri-miRNA). Acts as a regulator of embryonic stem cell self-renewal and differentiation. In Mus musculus (Mouse), this protein is tRNA (guanine-N(7)-)-methyltransferase.